Here is a 312-residue protein sequence, read N- to C-terminus: Src-like-adapter (312 aa).

Residues 1 to 33 (MLCRLPGPSTSRGEKEMGNSMKSTPAPLERPLS) form a disordered region. The SH3 domain maps to 38–98 (LESDFLAVLN…PGICVARVYH (61 aa)). Residues 100–191 (WLFEGLGRDK…GLCCVLTTPC (92 aa)) form the SH2 domain. Positions 206–312 (CTSPGSPVTL…TQKTKALTAT (107 aa)) are SLA C-terminal. A Phosphoserine modification is found at Ser274.

Homodimer. Interacts with phosphorylated CBL, SYK and LAT. Homodimerization and interaction with phosphorylated CBL occurs via its C-terminal domain. Interacts with PDGFRB and EPHA2. Interacts with phosphorylated proteins ZAP70; CD3Z; VAV1 and LCP2 via its SH2 domain. Post-translationally, phosphorylated.

It localises to the cytoplasm. It is found in the endosome. In terms of biological role, adapter protein, which negatively regulates T-cell receptor (TCR) signaling. Inhibits T-cell antigen-receptor induced activation of nuclear factor of activated T-cells. Involved in the negative regulation of positive selection and mitosis of T-cells. May act by linking signaling proteins such as ZAP70 with CBL, leading to a CBL dependent degradation of signaling proteins. The chain is Src-like-adapter (Sla) from Rattus norvegicus (Rat).